The sequence spans 264 residues: Neuferricin (264 aa).

The N-terminal stretch at 1 to 22 is a signal peptide; the sequence is MLRCGGRGLLLGLAVAAAAVMA. The 100-residue stretch at 35 to 134 folds into the Cytochrome b5 heme-binding domain; it reads FRLFIPEELS…KNYVCVGRVT (100 aa).

The protein belongs to the cytochrome b5 family. MAPR subfamily.

Its subcellular location is the secreted. In terms of biological role, heme-binding protein which promotes neuronal but not astrocyte differentiation. The chain is Neuferricin from Homo sapiens (Human).